An 85-amino-acid polypeptide reads, in one-letter code: Small ribosomal subunit protein uS17 (85 aa).

This sequence belongs to the universal ribosomal protein uS17 family. As to quaternary structure, part of the 30S ribosomal subunit.

Functionally, one of the primary rRNA binding proteins, it binds specifically to the 5'-end of 16S ribosomal RNA. The polypeptide is Small ribosomal subunit protein uS17 (Pasteurella multocida (strain Pm70)).